The sequence spans 507 residues: Probable Xaa-Pro aminopeptidase TRV_02643 (507 aa).

The Mn(2+) site is built by aspartate 275, aspartate 286, glutamate 434, and glutamate 478.

Belongs to the peptidase M24B family. Mn(2+) is required as a cofactor.

The enzyme catalyses Release of any N-terminal amino acid, including proline, that is linked to proline, even from a dipeptide or tripeptide.. Catalyzes the removal of a penultimate prolyl residue from the N-termini of peptides. This Trichophyton verrucosum (strain HKI 0517) protein is Probable Xaa-Pro aminopeptidase TRV_02643.